Consider the following 296-residue polypeptide: Diguanylate cyclase DgcS (296 aa).

One can recognise a GGDEF domain in the interval 165-293 (GSVSLIVLDL…GRNCYKLSPT (129 aa)). The Mg(2+) site is built by Asp173, Leu174, and Asp216. Asp216 is an active-site residue.

The cofactor is Mg(2+).

It carries out the reaction 2 GTP = 3',3'-c-di-GMP + 2 diphosphate. Catalyzes the synthesis of cyclic-di-GMP (c-di-GMP) via the condensation of 2 GTP molecules. May be involved in the regulation of formation of solid surface-associated biofilms and pellicles according to environmental conditions. This is Diguanylate cyclase DgcS from Shewanella oneidensis (strain ATCC 700550 / JCM 31522 / CIP 106686 / LMG 19005 / NCIMB 14063 / MR-1).